The sequence spans 132 residues: Ribonuclease P protein component 2 (132 aa).

Belongs to the eukaryotic/archaeal RNase P protein component 2 family. In terms of assembly, consists of a catalytic RNA component and at least 4-5 protein subunits.

It localises to the cytoplasm. The catalysed reaction is Endonucleolytic cleavage of RNA, removing 5'-extranucleotides from tRNA precursor.. Its function is as follows. Part of ribonuclease P, a protein complex that generates mature tRNA molecules by cleaving their 5'-ends. This chain is Ribonuclease P protein component 2, found in Methanosarcina acetivorans (strain ATCC 35395 / DSM 2834 / JCM 12185 / C2A).